The sequence spans 474 residues: MSIRAPPRLLELARQRLLRDQALAISTMEELPRELFPTLFMEAFSRRRCETLKTMVQAWPFTRLPLGSLMKSPHLESLKSVLEGVDVLLTQEVRPRQSKLQVLDLRNVDENFCDIFSGATASFPEALSQKQTADNCPGTGRQQPFMVFIDLCLKNRTLDECLTHLLEWGKQRKGLLHVCCKELQVFGMPIHSIIEVLNMVELDCIQEVEVCCPWELSTLVKFAPYLGQMRNLRKLVLFNIRASACIPPDNKGQFIARFTSQFLKLDYFQNLSMHSVSFLEGHLDQLLRCLQASLEMVVMTDCLLSESDLKHLSWCPSIRQLKELDLRGVTLTHFSPEPLTGLLEQVVATLQTLDLEDCGIMDSQLSAILPVLSRCSQLSTFSFCGNLISMAALENLLRHTVGLSKLSLELYPAPLESYDTQGALCWGRFAELGAELMNTLRDLRQPKIIVFCTVPCPRCGIRASYDLEPSHCLC.

The stretch at 97 to 122 is one LRR 1; degenerate repeat; that stretch reads QSKLQVLDLRNVDENFCDIFSGATAS. An LRR 2; degenerate repeat occupies 177–201; sequence HVCCKELQVFGMPIHSIIEVLNMVE. One copy of the LRR 3; degenerate repeat lies at 202-228; sequence LDCIQEVEVCCPWELSTLVKFAPYLGQ. An LRR 4; degenerate repeat occupies 229–264; it reads MRNLRKLVLFNIRASACIPPDNKGQFIARFTSQFLK. LRR repeat units follow at residues 265–290, 291–322, 323–341, 347–374, and 375–399; these read LDYF…LRCL, QASL…RQLK, ELDL…PLTG, VATL…VLSR, and CSQL…LLRH.

This sequence belongs to the PRAME family.

The chain is PRAME family member 8 from Homo sapiens (Human).